A 305-amino-acid chain; its full sequence is UDP-3-O-acyl-N-acetylglucosamine deacetylase (305 aa).

Residues His-78, His-237, and Asp-241 each coordinate Zn(2+). Catalysis depends on His-264, which acts as the Proton donor.

Belongs to the LpxC family. The cofactor is Zn(2+).

The catalysed reaction is a UDP-3-O-[(3R)-3-hydroxyacyl]-N-acetyl-alpha-D-glucosamine + H2O = a UDP-3-O-[(3R)-3-hydroxyacyl]-alpha-D-glucosamine + acetate. Its pathway is glycolipid biosynthesis; lipid IV(A) biosynthesis; lipid IV(A) from (3R)-3-hydroxytetradecanoyl-[acyl-carrier-protein] and UDP-N-acetyl-alpha-D-glucosamine: step 2/6. In terms of biological role, catalyzes the hydrolysis of UDP-3-O-myristoyl-N-acetylglucosamine to form UDP-3-O-myristoylglucosamine and acetate, the committed step in lipid A biosynthesis. The chain is UDP-3-O-acyl-N-acetylglucosamine deacetylase from Burkholderia pseudomallei (strain 668).